A 442-amino-acid polypeptide reads, in one-letter code: O-methyltransferase pgmB (442 aa).

Asp291 lines the S-adenosyl-L-methionine pocket. Residue His341 is the Proton acceptor of the active site.

Belongs to the class I-like SAM-binding methyltransferase superfamily. Cation-independent O-methyltransferase family.

It participates in pigment biosynthesis. The protein operates within secondary metabolite biosynthesis. Functionally, O-methyltransferase; part of the gene cluster that mediates the biosynthesis of pleosporalin A, ascomycone A, as well as a third cryptic naphthoquinone derived pigment, all responsible for the coloration of conidia. Specifically methylates position C-6 of the pgmA product 3-acetonyl-1,6,8-trihydroxy-2-naphthaldehyde to yield fusarubinaldehyde. The pathway begins with the biosynthesis of the cyclized heptaketide 3-acetonyl-1,6,8-trihydroxy-2-naphthaldehyde by the NR-PKS pgmA. The C-6 hydroxyl group is further methylated by the O-methyltransferase pgmB to yield fusarubinaldehyde which is in turn oxidized by the cytochrome P450 monooxygenase pgmC at C-9. The C-1 hydroxyl group is then methylated spontaneously. Although pgmE, pgmD and pgmH are essential for the production of pleosporalin A, it is not the case for the 2 other final products and it remains difficult to assign a specific function to each enzyme. PgmF and pgmG seem not to be involved in pigment biosynthesis although they were regulated by the cluster-specific transcription factor pgmR. In Aspergillus terreus, this protein is O-methyltransferase pgmB.